The sequence spans 193 residues: 3-isopropylmalate dehydratase small subunit (193 aa).

It belongs to the LeuD family. LeuD type 1 subfamily. Heterodimer of LeuC and LeuD.

The enzyme catalyses (2R,3S)-3-isopropylmalate = (2S)-2-isopropylmalate. It functions in the pathway amino-acid biosynthesis; L-leucine biosynthesis; L-leucine from 3-methyl-2-oxobutanoate: step 2/4. Functionally, catalyzes the isomerization between 2-isopropylmalate and 3-isopropylmalate, via the formation of 2-isopropylmaleate. The chain is 3-isopropylmalate dehydratase small subunit from Bacillus cereus (strain ZK / E33L).